Here is a 1326-residue protein sequence, read N- to C-terminus: Paired amphipathic helix protein Sin3-like 4 (1326 aa).

PAH domains lie at Q8–G78, K95–T165, and I292–C367. 4 disordered regions span residues D272–D299, V715–T812, S844–L864, and S927–M1000. The segment covering G721–E737 has biased composition (basic and acidic residues). Composition is skewed to polar residues over residues S744 to S757, S781 to T805, S844 to T861, and P942 to D961. Basic and acidic residues predominate over residues D967 to S981.

It localises to the nucleus. Acts as a transcriptional repressor. Plays roles in regulating gene expression and genome stability. The polypeptide is Paired amphipathic helix protein Sin3-like 4 (SNL4) (Arabidopsis thaliana (Mouse-ear cress)).